A 475-amino-acid chain; its full sequence is Ankyrin repeat, SAM and basic leucine zipper domain-containing protein 1 (475 aa).

The segment at 1 to 24 (MAAGPLRGLAVAGGGESSESEDDG) is disordered. Phosphoserine is present on residues serine 17, serine 18, and serine 20. ANK repeat units lie at residues 45–74 (ERQE…SVDT), 78–107 (YGWT…NASF), 110–144 (DKQT…DPNV), 148–177 (RLMT…EVNT), 181–210 (NGYT…NKMI), and 214–243 (DGKT…PLEG). In terms of domain architecture, SAM spans 272-334 (SYTAFGDLEI…KIMAALKELE (63 aa)).

As to quaternary structure, interacts with DDX4, PIWIL1, RANBP9 and TDRD1.

The protein resides in the cytoplasm. Plays a central role during spermatogenesis by repressing transposable elements and preventing their mobilization, which is essential for the germline integrity. Acts via the piRNA metabolic process, which mediates the repression of transposable elements during meiosis by forming complexes composed of piRNAs and Piwi proteins and governs the methylation and subsequent repression of transposons. Its association with pi-bodies suggests a participation in the primary piRNAs metabolic process. Required prior to the pachytene stage to facilitate the production of multiple types of piRNAs, including those associated with repeats involved in the regulation of retrotransposons. May act by mediating protein-protein interactions during germ cell maturation. This Ovis aries (Sheep) protein is Ankyrin repeat, SAM and basic leucine zipper domain-containing protein 1 (ASZ1).